Here is a 231-residue protein sequence, read N- to C-terminus: Chromosome partition protein MukE (231 aa).

Residues 195–231 (MIRDGEAMPVEGSLSLKDDSDDNDRTDDTAPETGEDE) are disordered. Over residues 213 to 231 (DSDDNDRTDDTAPETGEDE) the composition is skewed to acidic residues.

It belongs to the MukE family. As to quaternary structure, interacts, and probably forms a ternary complex, with MukF and MukB. The complex formation is stimulated by calcium or magnesium.

Its subcellular location is the cytoplasm. It is found in the nucleoid. Its function is as follows. Involved in chromosome condensation, segregation and cell cycle progression. May participate in facilitating chromosome segregation by condensation DNA from both sides of a centrally located replisome during cell division. Probably acts via its interaction with MukB and MukF. The sequence is that of Chromosome partition protein MukE from Pectobacterium atrosepticum (strain SCRI 1043 / ATCC BAA-672) (Erwinia carotovora subsp. atroseptica).